The following is a 406-amino-acid chain: Tryptophan 2,3-dioxygenase (406 aa).

Ser-19 is modified (phosphoserine). Substrate contacts are provided by residues Phe-72–His-76 and Arg-144. His-328 contacts heme. Thr-342 is a substrate binding site.

Belongs to the tryptophan 2,3-dioxygenase family. In terms of assembly, homotetramer. Dimer of dimers. Heme is required as a cofactor.

It carries out the reaction L-tryptophan + O2 = N-formyl-L-kynurenine. The protein operates within amino-acid degradation; L-tryptophan degradation via kynurenine pathway; L-kynurenine from L-tryptophan: step 1/2. In terms of biological role, heme-dependent dioxygenase that catalyzes the oxidative cleavage of the L-tryptophan (L-Trp) pyrrole ring and converts L-tryptophan to N-formyl-L-kynurenine. Catalyzes the oxidative cleavage of the indole moiety. The protein is Tryptophan 2,3-dioxygenase of Mus musculus (Mouse).